The primary structure comprises 311 residues: 4-hydroxy-tetrahydrodipicolinate synthase (311 aa).

Threonine 51 lines the pyruvate pocket. The active-site Proton donor/acceptor is the tyrosine 140. Lysine 168 (schiff-base intermediate with substrate) is an active-site residue. Isoleucine 209 contributes to the pyruvate binding site.

This sequence belongs to the DapA family. Homotetramer; dimer of dimers.

It localises to the cytoplasm. The enzyme catalyses L-aspartate 4-semialdehyde + pyruvate = (2S,4S)-4-hydroxy-2,3,4,5-tetrahydrodipicolinate + H2O + H(+). The protein operates within amino-acid biosynthesis; L-lysine biosynthesis via DAP pathway; (S)-tetrahydrodipicolinate from L-aspartate: step 3/4. In terms of biological role, catalyzes the condensation of (S)-aspartate-beta-semialdehyde [(S)-ASA] and pyruvate to 4-hydroxy-tetrahydrodipicolinate (HTPA). The polypeptide is 4-hydroxy-tetrahydrodipicolinate synthase (Streptococcus pneumoniae (strain ATCC BAA-255 / R6)).